Reading from the N-terminus, the 402-residue chain is D-galactonate dehydratase family member RspA (402 aa).

Substrate contacts are provided by N37 and H122. Catalysis depends on Y159, which acts as the Proton donor/acceptor. Position 210 (D210) interacts with Mg(2+). The Proton donor/acceptor role is filled by H212. The Mg(2+) site is built by E236 and E262. E262, R283, H312, D316, and E339 together coordinate substrate.

Belongs to the mandelate racemase/muconate lactonizing enzyme family. GalD subfamily. It depends on Mg(2+) as a cofactor.

It carries out the reaction D-mannonate = 2-dehydro-3-deoxy-D-gluconate + H2O. In terms of biological role, has low D-mannonate dehydratase activity (in vitro), suggesting that this is not a physiological substrate and that it has no significant role in D-mannonate degradation in vivo. Has no detectable activity with a panel of 70 other acid sugars (in vitro). The sequence is that of D-galactonate dehydratase family member RspA (rspA) from Cellvibrio japonicus (strain Ueda107) (Pseudomonas fluorescens subsp. cellulosa).